We begin with the raw amino-acid sequence, 465 residues long: Probable protein phosphatase 2C 71 (465 aa).

Disordered stretches follow at residues 14 to 47 (RPCK…ACRA), 68 to 119 (RPRD…GEVT), and 133 to 191 (SGGA…PAEE). Residues 18-30 (LAPPPPPPLPVSP) are compositionally biased toward pro residues. Low complexity-rich tracts occupy residues 84–106 (AVAP…AAAE) and 133–143 (SGGAEATATSG). One can recognise a PPM-type phosphatase domain in the interval 222–460 (ASGAAILPHP…DDIAVVVSIV (239 aa)). The Mn(2+) site is built by Asp-254, Gly-255, Asp-384, and Asp-451.

This sequence belongs to the PP2C family. Mg(2+) is required as a cofactor. Mn(2+) serves as cofactor.

It catalyses the reaction O-phospho-L-seryl-[protein] + H2O = L-seryl-[protein] + phosphate. It carries out the reaction O-phospho-L-threonyl-[protein] + H2O = L-threonyl-[protein] + phosphate. This chain is Probable protein phosphatase 2C 71, found in Oryza sativa subsp. japonica (Rice).